Reading from the N-terminus, the 1585-residue chain is Maestro heat-like repeat-containing protein family member 2B (1585 aa).

15 HEAT repeats span residues 28–65 (VNKEDIYSHLTSVIQNTDILDDAIVQRLIYYASKDMRD), 228–263 (GYALGQVPWLLNQYKDKEIDFHVTQSLKQILTAAVL), 272–309 (LRRSIFINLLQQICRAPEPPVKENEMKASSCFLILAHS), 310–346 (NPGELMEFFDEQVRSNNEAIRVGILTLLRLAVNADEP), 405–445 (TLNR…LVIG), 531–569 (IGLLKILPEIIHPKLVDLWKTRLPELLQPLEGKNISTVL), 572–611 (TMLLQLLKESLWKISDVAWTIQLTQDFKQQMGSYSNNSTE), 662–699 (ENHLDIVLKVLKTFQNQEKFFMNRCKSLFSGKKSLTKT), 777–819 (SYKE…LKPQ), 964–1001 (HLEVERLQGLQEGLESDDVQVQIKISSKIAKIVSKFIP), 1021–1059 (PTCTKACGIWMITVLKQQGAALEDQLLEILGTIYHHMPV), 1112–1151 (ASSGKLLQALIDKLETELEDDIARVEAISVACAMYEVISM), 1157–1195 (GLYPELFTLLLKLVSCTLGQKMLTCPWSHRRHVMQQGEQ), 1258–1295 (GVILDIMEQLLSSLTSSSENYRITGAAFFSELMKEPIL), and 1363–1402 (CESLKALKKILELLTDRDVSFYFKEIVLQTRTFFEDEQDD).

In terms of assembly, found in a complex at least composed of MROH2B, PRKACA isoform 2 and TCP11. Interacts with PRKACA. Interacts with TCP11. Post-translationally, constitutively phosphorylated on serine and threonine residues in acrosomal region of the sperm head, midpiece and flagellar regions of noncapacitated spermatozoa. Phosphorylation on tyrosine residues increases upon sperm capacitation within the acrosomal and tail regions in a protein kinase A (PKA)-dependent signaling pathway.

Its subcellular location is the cytoplasm. The protein localises to the cytoplasmic vesicle. It is found in the secretory vesicle. It localises to the acrosome. The protein resides in the cell projection. Its subcellular location is the cilium. The protein localises to the flagellum. Its function is as follows. May play a role in the process of sperm capacitation. The chain is Maestro heat-like repeat-containing protein family member 2B from Homo sapiens (Human).